The chain runs to 82 residues: Pigment-dispersing hormone peptides (82 aa).

Residues 1–26 (MIGKYLSWFMLAFLFGFVLESYRVQS) form the signal peptide. Position 80 is an alanine amide (Ala80).

The protein belongs to the arthropod PDH family. In terms of tissue distribution, expressed strongly in the head and weakly in the ventral nerve cord. Not detected in the midgut cecum or hindgut. In the cephalic neural complex, specifically localized to cells within the optic lobe, anteromedian protocerebrum, accessory lobe, tritocerebrum, and subesophageal ganglion.

The protein localises to the secreted. Functionally, the pigment-dispersing hormone causes the migration of the distal retinal pigment into the proximal end of the pigment chromatophore cells and thus decreases the amount of light entering the retinulas. May also function as a neurotransmitter and/or neuromodulator. The sequence is that of Pigment-dispersing hormone peptides from Armadillidium vulgare (Pillbug).